The following is a 78-amino-acid chain: ATP synthase subunit c (78 aa).

2 helical membrane-spanning segments follow: residues 16-36 and 57-77; these read LATL…ASFL and MALA…ILFV.

It belongs to the ATPase C chain family. As to quaternary structure, F-type ATPases have 2 components, F(1) - the catalytic core - and F(0) - the membrane proton channel. F(1) has five subunits: alpha(3), beta(3), gamma(1), delta(1), epsilon(1). F(0) has three main subunits: a(1), b(2) and c(10-14). The alpha and beta chains form an alternating ring which encloses part of the gamma chain. F(1) is attached to F(0) by a central stalk formed by the gamma and epsilon chains, while a peripheral stalk is formed by the delta and b chains.

Its subcellular location is the cell inner membrane. Functionally, f(1)F(0) ATP synthase produces ATP from ADP in the presence of a proton or sodium gradient. F-type ATPases consist of two structural domains, F(1) containing the extramembraneous catalytic core and F(0) containing the membrane proton channel, linked together by a central stalk and a peripheral stalk. During catalysis, ATP synthesis in the catalytic domain of F(1) is coupled via a rotary mechanism of the central stalk subunits to proton translocation. Its function is as follows. Key component of the F(0) channel; it plays a direct role in translocation across the membrane. A homomeric c-ring of between 10-14 subunits forms the central stalk rotor element with the F(1) delta and epsilon subunits. The protein is ATP synthase subunit c of Hyphomonas neptunium (strain ATCC 15444).